The primary structure comprises 351 residues: MTAHDADWSDRDVSGALVPGEGDIDVSLRPRSLREFIGQPRVREQLQLVIEGAKNRGGTPDHILLSGPPGLGKTSLAMIIAAELGSSLRVTSGPALERAGDLAAMLSNLVEHDVLFIDEIHRIARPAEEMLYLAMEDFRVDVVVGKGPGATSIPLEVAPFTLVGATTRSGALTGPLRDRFGFTAHMDFYEPAELQQVLARSAGILGIELGAEAAEEIARRSRGTPRIANRLLRRVRDFAEVRADGVITRDVAKAALAVYDVDELGLDRLDRAVLTALTRSFGGGPVGVSTLAVAVGEEAATVEEVCEPFLVRAGMVARTPRGRVATAQAWTHLGMVPPAGAAGLGQPGLFD.

Residues 1–189 (MTAHDADWSD…FGFTAHMDFY (189 aa)) are large ATPase domain (RuvB-L). ATP contacts are provided by residues L28, R29, G70, K73, T74, S75, 136–138 (EDF), R179, Y189, and R226. T74 contributes to the Mg(2+) binding site. The segment at 190–260 (EPAELQQVLA…VAKAALAVYD (71 aa)) is small ATPAse domain (RuvB-S). The segment at 263 to 351 (ELGLDRLDRA…AGLGQPGLFD (89 aa)) is head domain (RuvB-H). DNA contacts are provided by R318 and R323.

The protein belongs to the RuvB family. Homohexamer. Forms an RuvA(8)-RuvB(12)-Holliday junction (HJ) complex. HJ DNA is sandwiched between 2 RuvA tetramers; dsDNA enters through RuvA and exits via RuvB. An RuvB hexamer assembles on each DNA strand where it exits the tetramer. Each RuvB hexamer is contacted by two RuvA subunits (via domain III) on 2 adjacent RuvB subunits; this complex drives branch migration. In the full resolvosome a probable DNA-RuvA(4)-RuvB(12)-RuvC(2) complex forms which resolves the HJ.

It is found in the cytoplasm. It catalyses the reaction ATP + H2O = ADP + phosphate + H(+). In terms of biological role, the RuvA-RuvB-RuvC complex processes Holliday junction (HJ) DNA during genetic recombination and DNA repair, while the RuvA-RuvB complex plays an important role in the rescue of blocked DNA replication forks via replication fork reversal (RFR). RuvA specifically binds to HJ cruciform DNA, conferring on it an open structure. The RuvB hexamer acts as an ATP-dependent pump, pulling dsDNA into and through the RuvAB complex. RuvB forms 2 homohexamers on either side of HJ DNA bound by 1 or 2 RuvA tetramers; 4 subunits per hexamer contact DNA at a time. Coordinated motions by a converter formed by DNA-disengaged RuvB subunits stimulates ATP hydrolysis and nucleotide exchange. Immobilization of the converter enables RuvB to convert the ATP-contained energy into a lever motion, pulling 2 nucleotides of DNA out of the RuvA tetramer per ATP hydrolyzed, thus driving DNA branch migration. The RuvB motors rotate together with the DNA substrate, which together with the progressing nucleotide cycle form the mechanistic basis for DNA recombination by continuous HJ branch migration. Branch migration allows RuvC to scan DNA until it finds its consensus sequence, where it cleaves and resolves cruciform DNA. This Mycobacterium avium (strain 104) protein is Holliday junction branch migration complex subunit RuvB.